The following is a 450-amino-acid chain: Asparagine--tRNA ligase (450 aa).

This sequence belongs to the class-II aminoacyl-tRNA synthetase family. In terms of assembly, homodimer.

It is found in the cytoplasm. The catalysed reaction is tRNA(Asn) + L-asparagine + ATP = L-asparaginyl-tRNA(Asn) + AMP + diphosphate + H(+). The sequence is that of Asparagine--tRNA ligase from Enterococcus faecalis (strain ATCC 700802 / V583).